Here is a 228-residue protein sequence, read N- to C-terminus: Small ribosomal subunit protein uS7m (228 aa).

The transit peptide at 1–33 (MAASVRHLLKPWTPSLCLMRWSRYNPYYLDPEP) directs the protein to the mitochondrion.

The protein belongs to the universal ribosomal protein uS7 family. As to quaternary structure, component of the mitochondrial ribosome small subunit (28S) which comprises a 12S rRNA and about 30 distinct proteins.

It is found in the mitochondrion. The protein is Small ribosomal subunit protein uS7m (mrps7) of Danio rerio (Zebrafish).